A 467-amino-acid polypeptide reads, in one-letter code: Tubulointerstitial nephritis antigen-like (467 aa).

The N-terminal stretch at 1 to 21 (MWGCPLGLLLLLLAGQAALEA) is a signal peptide. The SMB domain maps to 49–96 (EQDMCCRGRADECALPYLGATCYCDLFCNRTVSDCCPDFWDFCLGIPP). Disulfide bonds link Cys-53–Cys-72, Cys-70–Cys-72, Cys-70–Cys-84, Cys-76–Cys-83, and Cys-84–Cys-91. A glycan (N-linked (GlcNAc...) asparagine) is linked at Asn-77. N-linked (GlcNAc...) asparagine glycosylation occurs at Asn-160.

This sequence belongs to the peptidase C1 family. In terms of processing, glycosylated.

It localises to the secreted. Its function is as follows. May be implicated in the adrenocortical zonation and in mechanisms for repressing the CYP11B1 gene expression in adrenocortical cells. This is a non catalytic peptidase C1 family protein. The sequence is that of Tubulointerstitial nephritis antigen-like (Tinagl1) from Rattus norvegicus (Rat).